The primary structure comprises 485 residues: Choline/ethanolamine transporter flvcr2b (485 aa).

Topologically, residues 1–46 (MDTRFNDINRVKMGDESKSVDGEVNDNTYYSKTDAEVNFEHRYTTP) are cytoplasmic. The helical transmembrane segment at 47–71 (ETRLYKKRWVIVCLFSSYSLCNSYQ) threads the bilayer. Residues Asn68 and Trp72 each contribute to the choline site. Residues 72 to 89 (WIQYGIINNIFMRFYGVD) are Extracellular-facing. The helical transmembrane segment at 90–117 (SFTIDWMSMIYMLTYIPLIFPVSWLLDK) threads the bilayer. Residues 118–119 (KG) are Cytoplasmic-facing. The chain crosses the membrane as a helical span at residues 120–139 (LRVIALVAAALNCAGTWIKV). Residues 140–146 (ASARPDL) are Extracellular-facing. Residues 147-175 (FPVTFLGQFTCSVAQVFILGMPSRIASVW) traverse the membrane as a helical segment. Positions 161 and 165 each coordinate choline. Residues 176–180 (FGSDE) lie on the Cytoplasmic side of the membrane. Residues 181–206 (VSTACSIGVFGNQLGIAIGFLVPPIL) traverse the membrane as a helical segment. At 207–211 (VPNVD) the chain is on the extracellular side. The chain crosses the membrane as a helical span at residues 212–241 (DLDELAAHIRVMFYITAGVATFLFVLVVIV). Topologically, residues 242-277 (FQERPEIPPTLAQAAARRISPESYSYTASILRLLRN) are cytoplasmic. Residues 278-308 (KAFILLVITYGLNVGCFYAVSTLLNRMIIEH) traverse the membrane as a helical segment. Tyr295 is a choline binding site. Over 309–312 (YPGE) the chain is Extracellular. Residues 313-341 (EVNAGRIGLTIVVAGMVGSLICGIWLDRS) traverse the membrane as a helical segment. The Cytoplasmic segment spans residues 342-343 (KT). The chain crosses the membrane as a helical span at residues 344–366 (YKQTTLAVYLMSLMGLVIYAFTL). The Extracellular portion of the chain corresponds to 367–369 (DLH). The chain crosses the membrane as a helical span at residues 370–399 (HLWVVFITAGALGFFMTGYLPLGFEFAVEL). Residues 400-407 (TYPESEGT) are Cytoplasmic-facing. The chain crosses the membrane as a helical span at residues 408–433 (SSGLLNCSAQVFGIIFTICQGKIMDS). Position 417 (Gln417) interacts with choline. Topologically, residues 434 to 435 (FG) are extracellular. The chain crosses the membrane as a helical span at residues 436–458 (TLAGNLFLCAFLLIGTIITGCIK). Residues 459–485 (SDLRRQLANQQAQTADHLDTSPTQTRF) are Cytoplasmic-facing.

It belongs to the major facilitator superfamily. Feline leukemia virus subgroup C receptor (TC 2.A.1.28.1) family.

Its subcellular location is the cell membrane. The protein resides in the mitochondrion membrane. It is found in the endoplasmic reticulum membrane. It catalyses the reaction choline(out) = choline(in). The enzyme catalyses ethanolamine(in) = ethanolamine(out). The catalysed reaction is heme b(in) = heme b(out). Choline uniporter that specifically mediates choline uptake at the blood-brain-barrier. Responsible for the majority of choline uptake across the blood-brain-barrier from the circulation into the brain. Choline, a nutrient critical for brain development, is a precursor of phosphatidylcholine, as well as betaine. Also mediates transport of ethanolamine. Choline and ethanolamine transport is not coupled with proton transport and is exclusively driven by the choline gradient across the plasma membrane. Also acts as a heme b transporter. The chain is Choline/ethanolamine transporter flvcr2b from Danio rerio (Zebrafish).